A 253-amino-acid polypeptide reads, in one-letter code: Imidazole glycerol phosphate synthase subunit HisF (253 aa).

Catalysis depends on residues aspartate 11 and aspartate 130.

Belongs to the HisA/HisF family. As to quaternary structure, heterodimer of HisH and HisF.

Its subcellular location is the cytoplasm. It carries out the reaction 5-[(5-phospho-1-deoxy-D-ribulos-1-ylimino)methylamino]-1-(5-phospho-beta-D-ribosyl)imidazole-4-carboxamide + L-glutamine = D-erythro-1-(imidazol-4-yl)glycerol 3-phosphate + 5-amino-1-(5-phospho-beta-D-ribosyl)imidazole-4-carboxamide + L-glutamate + H(+). Its pathway is amino-acid biosynthesis; L-histidine biosynthesis; L-histidine from 5-phospho-alpha-D-ribose 1-diphosphate: step 5/9. IGPS catalyzes the conversion of PRFAR and glutamine to IGP, AICAR and glutamate. The HisF subunit catalyzes the cyclization activity that produces IGP and AICAR from PRFAR using the ammonia provided by the HisH subunit. The chain is Imidazole glycerol phosphate synthase subunit HisF from Geotalea uraniireducens (strain Rf4) (Geobacter uraniireducens).